The chain runs to 303 residues: Quinolinate synthase (303 aa).

2 residues coordinate iminosuccinate: histidine 25 and serine 42. Cysteine 87 contributes to the [4Fe-4S] cluster binding site. Iminosuccinate contacts are provided by residues 113 to 115 (YVN) and serine 130. Position 173 (cysteine 173) interacts with [4Fe-4S] cluster. Iminosuccinate contacts are provided by residues 199–201 (HPE) and threonine 216. Cysteine 261 contacts [4Fe-4S] cluster.

This sequence belongs to the quinolinate synthase family. Type 2 subfamily. [4Fe-4S] cluster serves as cofactor.

The protein localises to the cytoplasm. The catalysed reaction is iminosuccinate + dihydroxyacetone phosphate = quinolinate + phosphate + 2 H2O + H(+). It participates in cofactor biosynthesis; NAD(+) biosynthesis; quinolinate from iminoaspartate: step 1/1. Catalyzes the condensation of iminoaspartate with dihydroxyacetone phosphate to form quinolinate. This is Quinolinate synthase from Desulforudis audaxviator (strain MP104C).